A 53-amino-acid polypeptide reads, in one-letter code: Bowman-Birk type proteinase inhibitor II-4 (53 aa).

4 disulfides stabilise this stretch: C8–C23, C13–C21, C30–C37, and C34–C49.

The protein belongs to the Bowman-Birk serine protease inhibitor family.

This is Bowman-Birk type proteinase inhibitor II-4 from Triticum aestivum (Wheat).